A 62-amino-acid chain; its full sequence is MTIAFQLAVFALIATSSILLISVPVVFASPDGWSSNKNIVFSGTSLWIGLVFLVGILNSLIS.

A run of 2 helical transmembrane segments spans residues 8 to 28 and 41 to 61; these read AVFA…VVFA and FSGT…NSLI.

Belongs to the PsbZ family. In terms of assembly, PSII is composed of 1 copy each of membrane proteins PsbA, PsbB, PsbC, PsbD, PsbE, PsbF, PsbH, PsbI, PsbJ, PsbK, PsbL, PsbM, PsbT, PsbY, PsbZ, Psb30/Ycf12, at least 3 peripheral proteins of the oxygen-evolving complex and a large number of cofactors. It forms dimeric complexes.

The protein resides in the plastid. Its subcellular location is the chloroplast thylakoid membrane. Its function is as follows. May control the interaction of photosystem II (PSII) cores with the light-harvesting antenna, regulates electron flow through the 2 photosystem reaction centers. PSII is a light-driven water plastoquinone oxidoreductase, using light energy to abstract electrons from H(2)O, generating a proton gradient subsequently used for ATP formation. In Vitis vinifera (Grape), this protein is Photosystem II reaction center protein Z.